A 316-amino-acid polypeptide reads, in one-letter code: NAC domain-containing protein 2 (316 aa).

One can recognise an NAC domain in the interval 17–170 (LPPGFRFHPT…DWVLCRLYNK (154 aa)). A DNA-binding region spans residues 114–176 (LGIKKALVFY…LYNKKNEWEK (63 aa)). Positions 185 to 210 (EEASDMVTSQSHSHTHSWGETRTPES) are disordered. Positions 190-200 (MVTSQSHSHTH) are enriched in polar residues.

As to quaternary structure, forms homodimer. Interacts with NAC071. Expressed in roots and stamens.

It localises to the nucleus. Functionally, transcription factor that possesses transactivation activity. Transcription activator involved in response to abiotic stresses. Plays a positive role during dehydration and salt stress. Binds specifically to the 5'-CATGTG-3' motif found in promoters of stress-responsive genes. The chain is NAC domain-containing protein 2 from Oryza sativa subsp. japonica (Rice).